A 1074-amino-acid chain; its full sequence is Zinc finger protein 518B (1074 aa).

Polar residues predominate over residues 12–24; the sequence is HLNGGHNSLTMSP. Residues 12 to 36 form a disordered region; that stretch reads HLNGGHNSLTMSPKQPDANGAPRPN. 2 consecutive C2H2-type zinc fingers follow at residues 162–184 and 190–213; these read FICS…LVKH and YQCE…KRVH. Glycyl lysine isopeptide (Lys-Gly) (interchain with G-Cter in SUMO2) cross-links involve residues Lys-482, Lys-491, and Lys-558. The segment at 568-590 is disordered; the sequence is SNRKQEDNQTEEHKAVSTVGQIS. Over residues 570–582 the composition is skewed to basic and acidic residues; it reads RKQEDNQTEEHKA. Lys-594 participates in a covalent cross-link: Glycyl lysine isopeptide (Lys-Gly) (interchain with G-Cter in SUMO2). 2 disordered regions span residues 603-632 and 678-704; these read TGED…DGPV and KPSS…KATS. Basic and acidic residues predominate over residues 604-622; that stretch reads GEDRSQQPGDKPLELKNSE. A compositionally biased stretch (polar residues) spans 693-704; it reads GQASKGTSKATS. Glycyl lysine isopeptide (Lys-Gly) (interchain with G-Cter in SUMO2) cross-links involve residues Lys-809, Lys-846, and Lys-860. The segment at 1036–1058 adopts a C2H2-type 3 zinc-finger fold; sequence FKCWFCGRLYEDQEEWMSHGQRH.

This sequence belongs to the krueppel C2H2-type zinc-finger protein family.

The protein resides in the nucleus. Functionally, through its association with the EHMT1-EHMT2/G9A and PRC2/EED-EZH2 histone methyltransferase complexes may function in gene silencing, regulating repressive post-translational methylation of histone tails at promoters of target genes. This chain is Zinc finger protein 518B (ZNF518B), found in Homo sapiens (Human).